A 122-amino-acid polypeptide reads, in one-letter code: UPF0382 membrane protein SAUSA300_0565 (122 aa).

Transmembrane regions (helical) follow at residues 3 to 23 (LFIILGALNAMMAVGTGAFGA), 46 to 66 (MYHGLALLIIGVISGTTSINV), 69 to 89 (AGWLIFAGIIFFSGSLYILVL), and 98 to 118 (ITPIGGVLFIIGWIMLIIATF).

The protein belongs to the UPF0382 family.

The protein localises to the cell membrane. This is UPF0382 membrane protein SAUSA300_0565 from Staphylococcus aureus (strain USA300).